Reading from the N-terminus, the 406-residue chain is Arginine deiminase (406 aa).

Catalysis depends on Cys396, which acts as the Amidino-cysteine intermediate.

Belongs to the arginine deiminase family.

It localises to the cytoplasm. It carries out the reaction L-arginine + H2O = L-citrulline + NH4(+). It participates in amino-acid degradation; L-arginine degradation via ADI pathway; carbamoyl phosphate from L-arginine: step 1/2. This chain is Arginine deiminase, found in Aliivibrio fischeri (strain ATCC 700601 / ES114) (Vibrio fischeri).